The chain runs to 232 residues: RNA chaperone ProQ (232 aa).

The segment at 105–182 is disordered; the sequence is EAKARVQAQR…REEQHTPVSD (78 aa). Over residues 117–136 the composition is skewed to basic and acidic residues; that stretch reads QQAKKREAAAAAGEKEDAPR. Positions 137–146 are enriched in basic residues; that stretch reads RERKPRPTTP. The segment covering 147–177 has biased composition (basic and acidic residues); sequence RRKEGAERKPRSQKPVEKAPKTVKAPREEQH.

It belongs to the ProQ family.

It localises to the cytoplasm. RNA chaperone with significant RNA binding, RNA strand exchange and RNA duplexing activities. May regulate ProP activity through an RNA-based, post-transcriptional mechanism. The chain is RNA chaperone ProQ from Escherichia coli (strain UTI89 / UPEC).